Consider the following 144-residue polypeptide: Prefoldin subunit alpha (144 aa).

It belongs to the prefoldin subunit alpha family. As to quaternary structure, heterohexamer of two alpha and four beta subunits.

It is found in the cytoplasm. Its function is as follows. Molecular chaperone capable of stabilizing a range of proteins. Seems to fulfill an ATP-independent, HSP70-like function in archaeal de novo protein folding. The sequence is that of Prefoldin subunit alpha from Methanosarcina barkeri (strain Fusaro / DSM 804).